Reading from the N-terminus, the 896-residue chain is NEDD4-binding protein 1 (896 aa).

The region spanning 59–143 is the KH-like domain; sequence QEAVHSAKEY…IQQFVKLFEN (85 aa). Position 226 is a phosphoserine (Ser226). At Thr242 the chain carries Phosphothreonine. A phosphoserine mark is found at Ser258 and Ser300. Disordered stretches follow at residues 403-430 and 488-507; these read YPET…PKKT and ETDG…VNFV. Over residues 414–430 the composition is skewed to polar residues; the sequence is VYSSTNELTTDSTPKKT. Ser562 is modified (phosphoserine). The region spanning 617–769 is the RNase NYN domain; sequence LKHIVIDGSN…LGRSGPRLEE (153 aa). Positions 801–821 are disordered; the sequence is GTQAASTSHQPPTRIQGAPSS. A compositionally biased stretch (polar residues) spans 803 to 813; that stretch reads QAASTSHQPPT. Residues 849–896 are coCUN; it reads RSSAETNELREALLKIFPDSEQRLKIDQILVAHPYMKDLNALSAMVLD.

This sequence belongs to the N4BP1 family. As to quaternary structure, interacts with NEDD4. Interacts with ITCH (via WW domain 2). In terms of processing, proteolytically cleaved by CASP8 downstream of TLR3 or TLR4, leading to its inactivation. Mainly cleaved at Asp-490 by CASP8. Cleaved by caspase-like protein MALT1 in T-cells following TCR-mediated activation, leading to its inactivation and subsequent viral reactivation during HIV-1 infection. Mono- and polyubiquitinated on the CoCUN region. Monoubiquitinated by NEDD4. Polyubiquitinated, leading to its degradation by the proteasome. Sumoylated with SUMO1, abrogating polyubiquitination and subsequent degradation. Desumoylated by SENP1, leading to accumulation in PML nuclear bodies. As to expression, detected in heart, lung, brain, liver, skeletal muscle, pancreas, kidney, spleen, testis and ovary.

It localises to the cytoplasm. The protein resides in the cytosol. The protein localises to the nucleus. It is found in the nucleolus. Its subcellular location is the PML body. Proteolytic cleavage by CASP8 or MALT1 leads to its inactivation. Potent suppressor of cytokine production that acts as a regulator of innate immune signaling and inflammation. Acts as a key negative regulator of select cytokine and chemokine responses elicited by TRIF-independent Toll-like receptors (TLRs), thereby limiting inflammatory cytokine responses to minor insults. In response to more threatening pathogens, cleaved by CASP8 downstream of TLR3 or TLR4, leading to its inactivation, thereby allowing production of inflammatory cytokines. Acts as a restriction factor against some viruses, such as HIV-1: restricts HIV-1 replication by binding to HIV-1 mRNAs and mediating their degradation via its ribonuclease activity. Also acts as an inhibitor of the E3 ubiquitin-protein ligase ITCH: acts by interacting with the second WW domain of ITCH, leading to compete with ITCH's substrates and impairing ubiquitination of substrates. This chain is NEDD4-binding protein 1, found in Homo sapiens (Human).